We begin with the raw amino-acid sequence, 265 residues long: Phosphonates import ATP-binding protein PhnC (265 aa).

Residues 18-262 enclose the ABC transporter domain; that stretch reads LVVEHLRKEY…HLKQIYGGEE (245 aa). 51 to 58 contributes to the ATP binding site; it reads GPSGTGKS.

This sequence belongs to the ABC transporter superfamily. Phosphonates importer (TC 3.A.1.9.1) family. As to quaternary structure, the complex is composed of two ATP-binding proteins (PhnC), two transmembrane proteins (PhnE) and a solute-binding protein (PhnD).

The protein localises to the cell inner membrane. It catalyses the reaction phosphonate(out) + ATP + H2O = phosphonate(in) + ADP + phosphate + H(+). Its function is as follows. Part of the ABC transporter complex PhnCDE involved in phosphonates import. Responsible for energy coupling to the transport system. The polypeptide is Phosphonates import ATP-binding protein PhnC (Nitratidesulfovibrio vulgaris (strain ATCC 29579 / DSM 644 / CCUG 34227 / NCIMB 8303 / VKM B-1760 / Hildenborough) (Desulfovibrio vulgaris)).